The sequence spans 212 residues: Ropporin-1 (212 aa).

An RIIa domain is found at 12–49 (PELPKMLKEFAKAAIRAQPQDLIQWGADYFEALSRGET). Ser-56 is subject to Phosphoserine. The segment at 209-212 (VWLE) is interaction with RHPN1.

The protein belongs to the ropporin family. Homodimer. Interacts with AKAP3. May interact with SPA17. Interacts with RHPN1. Interacts with FSCB; the interaction increases upon spermatozoa capacitation conditions. Interacts with CFAP61. Sumoylated, sumoylation decreases upon spermatozoa capacitation conditions.

Its subcellular location is the cell projection. It is found in the cilium. It localises to the flagellum. Its function is as follows. Important for male fertility. With ROPN1L, involved in fibrous sheath integrity and sperm motility, plays a role in PKA-dependent signaling processes required for spermatozoa capacitation. The protein is Ropporin-1 (ROPN1) of Macaca fascicularis (Crab-eating macaque).